The primary structure comprises 234 residues: Interleukin-34 (234 aa).

Residues 1-20 form the signal peptide; it reads MPQGLAWLRYLGILLGMALG. Residue asparagine 76 is glycosylated (N-linked (GlcNAc...) asparagine). The interval 191 to 234 is disordered; sequence EAPQPQPRSPASAQCEAAQLYPLPQPPSTSLPRVLGPSAGPPTQ.

It belongs to the IL-34 family. Homodimer. Interacts with CSF1R.

The protein resides in the secreted. Cytokine that promotes the proliferation, survival and differentiation of monocytes and macrophages. Promotes the release of pro-inflammatory chemokines, and thereby plays an important role in innate immunity and in inflammatory processes. Plays an important role in the regulation of osteoclast proliferation and differentiation, and in the regulation of bone resorption. Signaling via CSF1R and its downstream effectors stimulates phosphorylation of MAPK1/ERK2 AND MAPK3/ERK1. This is Interleukin-34 from Bos taurus (Bovine).